Reading from the N-terminus, the 351-residue chain is Heat-inducible transcription repressor HrcA (351 aa).

It belongs to the HrcA family.

In terms of biological role, negative regulator of class I heat shock genes (grpE-dnaK-dnaJ and groELS operons). Prevents heat-shock induction of these operons. This chain is Heat-inducible transcription repressor HrcA, found in Fusobacterium nucleatum subsp. nucleatum (strain ATCC 25586 / DSM 15643 / BCRC 10681 / CIP 101130 / JCM 8532 / KCTC 2640 / LMG 13131 / VPI 4355).